Reading from the N-terminus, the 7182-residue chain is Replicase polyprotein 1ab (7182 aa).

The region spanning 25 to 151 (RTDHVSLKAS…EFQFLLRKKG (127 aa)) is the CoV Nsp1 globular domain. Positions 159–195 (DAPWDYNWTPYSDLMDALEADPCGKYSQSLLKKLVGG) constitute a BetaCoV Nsp1 C-terminal domain. One can recognise a CoV Nsp2 N-terminal domain in the interval 197–473 (FTPIDQYMCG…WSKVCETANL (277 aa)). Cys340, Cys343, Cys359, and Cys361 together coordinate Zn(2+). Residues 340-361 (CTSCGKGSWLTGNAVQGFACDC) form a C4 region. The region spanning 479–713 (QHAINFVNEF…MHILSKAMQL (235 aa)) is the CoV Nsp2 middle domain. The CoV Nsp2 C-terminal domain occupies 715–851 (HTTVSWAGSK…VPTLFRLKGG (137 aa)). In terms of domain architecture, Ubiquitin-like 1 spans 855-964 (KGVKFGGEQT…MTFSVNPVEE (110 aa)). Macro domains follow at residues 1186-1345 (PLKN…KVYN) and 1354-1480 (TGLT…AVQT). The 74-residue stretch at 1480–1553 (TPEQSFINTV…LEKCRTYLTS (74 aa)) folds into the DPUP domain. Positions 1558–1613 (QKNVDVLVTIDGVNFRTVVLNNTTTYRVQLGSVFYKGSDISDTIPTEKMSGEAVYL) constitute a Ubiquitin-like 2 domain. Residues 1628–1902 (VYGTADTAFL…WADVDPDLSA (275 aa)) enclose the Peptidase C16 domain. The active-site For PL-PRO activity is Cys1668. Residues Cys1748, Cys1751, Cys1783, and Cys1785 each contribute to the Zn(2+) site. A C4-type zinc finger spans residues 1748–1785 (CNVCGVQDTTTTGLKACIYVGMNSLDELHATHEECCQC). Catalysis depends on for PL-PRO activity residues His1838 and Asp1853. A Nucleic acid-binding domain is found at 1916-2033 (VIEYSPATIL…QVYDIAPVTL (118 aa)). A G2M domain is found at 2059-2179 (PQSPVQVAED…ASVTVNVTTA (121 aa)). 3 helical membrane passes run 2158 to 2178 (ILLG…NVTT), 2196 to 2216 (GIIG…FTFW), and 2268 to 2288 (LLFL…LFLF). An HD1 region spans residues 2158 to 2441 (ILLGASSLFA…VTHIPLLGLV (284 aa)). The 3Ecto domain occupies 2305–2371 (LATYRELRSY…FQMIQTHVTS (67 aa)). 2 disulfide bridges follow: Cys2321-Cys2349 and Cys2339-Cys2346. The next 3 membrane-spanning stretches (helical) occupy residues 2372–2392 (YVIN…YVLY), 2396–2416 (FNVL…GAFV), and 2421–2441 (YNYL…LGLV). The interval 2455–2545 (RFYNHVINGC…SLRRLVKPTD (91 aa)) is Y1. The region spanning 2455–2828 (RFYNHVINGC…LSVKFSATKL (374 aa)) is the CoV Nsp3 Y domain. Zn(2+) contacts are provided by His2459, Cys2464, Cys2469, Cys2472, Cys2505, His2508, Cys2512, and Cys2515. The tract at residues 2459–2472 (HVINGCKDTACLLC) is ZF1. Positions 2505 to 2515 (CCRHNWNCVDC) are ZF2. A Y2 region spans residues 2546-2644 (KSHYYVESVT…LVDSNMVTTV (99 aa)). A coV-Y region spans residues 2546–2828 (KSHYYVESVT…LSVKFSATKL (283 aa)). The interval 2645–2727 (GDSREIASKM…DALQYAYKHD (83 aa)) is Y3. A Y4 region spans residues 2728–2828 (LQLTTEGFNN…LSVKFSATKL (101 aa)). Transmembrane regions (helical) follow at residues 2848 to 2868 (CVVT…LPAF), 3119 to 3139 (STSL…FYYV), 3152 to 3172 (CAVV…FVVS), and 3203 to 3223 (WFVM…IVGV). The segment at 2848–3223 (CVVTLVVFAM…WMVFAYIVGV (376 aa)) is HD2. Residues 3242-3338 (VFTDGKLNCS…NCSVTSSVLQ (97 aa)) enclose the Nsp4C domain. A Peptidase C30 domain is found at 3339–3644 (SGLVKMAAPS…NMQVMGVVMQ (306 aa)). Active-site for 3CL-PRO activity residues include His3379 and Cys3486. A run of 7 helical transmembrane segments spans residues 3650–3670 (ISYG…VATL), 3684–3704 (VIPL…MLTV), 3709–3729 (TFLT…NIVY), 3760–3777 (LGVY…VRRL), 3782–3802 (ASNL…YTTG), 3823–3843 (VTVF…FLYA), and 3855–3875 (LVLL…GVFS). The interval 3650–3875 (ISYGLVHWLF…FCTVYFGVFS (226 aa)) is HD3. The 83-residue stretch at 3937-4019 (SKLTDLKCTS…DLLDHPSVLQ (83 aa)) folds into the RdRp Nsp7 cofactor domain. Residues 4020 to 4218 (ATLSEFSHLA…RAASSAVTLQ (199 aa)) enclose the RdRp Nsp8 cofactor domain. A Nsp9 ssRNA-binding domain is found at 4219-4328 (NNEIRPSGLK…GHIAATVRLQ (110 aa)). An ExoN/MTase coactivator domain is found at 4329 to 4467 (AGSNTEFAIN…DALRGTTIPQ (139 aa)). Zn(2+)-binding residues include Cys4402, Cys4405, His4411, Cys4418, Cys4444, Cys4447, Cys4455, and Cys4457. 2 zinc fingers span residues 4402–4418 (CLYC…TGVC) and 4444–4457 (CNVC…GCNC). Positions 4473 to 4730 (FLNRVRGSIV…AAETHRDCDL (258 aa)) constitute a NiRAN domain. Residues Asn4678 and Asp4687 each coordinate Mn(2+). The Nsp12 Interface domain maps to 4735–4833 (IEWPLLEYDY…MNMDVSLHRH (99 aa)). Zn(2+)-binding residues include His4764, Cys4770, Cys4775, Cys4779, and Cys4956. The Nsp12 RNA-dependent RNA polymerase domain maps to 4834–5401 (RLSLKELMMY…DLYTAPTTLQ (568 aa)). A rdRp Fingers N-ter region spans residues 4836 to 5050 (SLKELMMYAA…HQKMLKSMAA (215 aa)). The segment at 5051–5089 (TRGSTCVIGTTKFYGGWDFMLKTLYKDVDNPHLMGWDYP) is rdRp Palm N-ter. A RdRp catalytic domain is found at 5081–5243 (PHLMGWDYPK…CYNSDYATKG (163 aa)). The interval 5090–5148 (KCDRAMPNMCRIFASLILARKHSTCCTNTDRFYRLANECAQVLSEYVLCGGGYYVKPGG) is rdRp Fingers C-ter. His5111, Cys5114, and Cys5115 together coordinate Zn(2+). The tract at residues 5149–5284 (TSSGDATTAY…KKGPHEFCSQ (136 aa)) is rdRp Palm C-ter. Catalysis depends on residues Ser5228, Asp5229, and Asp5230. The interval 5285–5401 (HTLFIKDGDD…DLYTAPTTLQ (117 aa)) is rdRp Thumb. The CV ZBD domain occupies 5402–5514 (AVGSCVVCHS…TEFNRLATCD (113 aa)). Cys5406, Cys5409, Cys5417, Cys5420, Cys5427, Cys5430, His5434, His5440, Cys5451, Cys5456, Cys5473, and His5476 together coordinate Zn(2+). The (+)RNA virus helicase ATP-binding domain maps to 5658–5839 (TVPEEFANHV…MCNLGPDIFL (182 aa)). 5683 to 5690 (GPPGTGKS) serves as a coordination point for ATP. The (+)RNA virus helicase C-terminal domain maps to 5840–6014 (SVCYRCPEEI…GLYKDCSRES (175 aa)). The ExoN domain occupies 6071-6286 (LFITRDEAIR…RCLAIHDCFI (216 aa)). Catalysis depends on residues Asp6089, Glu6091, and Glu6190. The Zn(2+) site is built by Cys6206, Cys6209, Cys6225, His6228, His6256, Cys6260, and His6263. Residues His6267 and Asp6272 contribute to the active site. Cys6278 is a binding site for Zn(2+). The region spanning 6295–6523 (YPYISHEKRL…NLWSTFTKIQ (229 aa)) is the N7-MTase domain. 6330-6336 (DIGNPKG) is a binding site for S-adenosyl-L-methionine. The interval 6409–6423 (CDGGSLYVNKHAFHT) is gpppA-binding. Residues Cys6447, Cys6469, Cys6480, and His6483 each contribute to the Zn(2+) site. One can recognise a Nsp15 N-terminal oligomerization domain in the interval 6524 to 6584 (GLENIAYNVI…NIAFELYAKR (61 aa)). Residues 6585-6715 (AVRSHPDFNL…IYKKVNNEFV (131 aa)) enclose the AV-Nsp11N/CoV-Nsp15M domain. The region spanning 6732-6871 (TPVSEMEKDF…KDGQVQTFYP (140 aa)) is the NendoU domain. Residues His6762, His6777, Lys6817, Lys6920, Asp7004, Lys7044, and Glu7077 contribute to the active site. The 295-residue stretch at 6876 to 7170 (INDWKPGLAM…TLSVSTDVLV (295 aa)) folds into the Nidovirus-type SAM-dependent 2'-O-MTase domain.

This sequence belongs to the coronaviruses polyprotein 1ab family. Interacts with host PHB and PHB2. In terms of assembly, interacts with papain-like protease nsp3 and non-structural protein 6. As to quaternary structure, monomer. Homodimer. Only the homodimer shows catalytic activity. Interacts with nsp8 and nsp12 to form the replication-transcription complex (RTC): nsp12, nsp7, two subunits of nsp8, and up to two subunits of nsp13. In terms of assembly, interacts with nsp7, nsp13 and nsp12 to form the replication-transcription complex (RTC): nsp12, nsp7, two subunits of nsp8, and up to two subunits of nsp13. As to quaternary structure, interacts with nsp12. Interacts with proofreading exoribonuclease nsp14 and 2'-O-methyltransferase nsp16; these interactions enhance nsp14 and nsp16 enzymatic activities. In terms of assembly, interacts with nsp7 and nsp8 to form the replication-transcription complex (RTC): nsp12, nsp7, two subunits of nsp8, and up to two subunits of nsp13. Interacts with nsp9. As to quaternary structure, interacts with nsp8 to form the replication-transcription complex (RTC): nsp12, nsp7, two subunits of nsp8, and up to two subunits of nsp13. Mn(2+) serves as cofactor. The cofactor is Mg(2+). In terms of processing, specific enzymatic cleavages in vivo by its own proteases yield mature proteins. 3CL-PRO and PL-PRO proteinases are autocatalytically processed.

It is found in the host membrane. Its subcellular location is the host cytoplasm. The protein resides in the host perinuclear region. It localises to the host endoplasmic reticulum-Golgi intermediate compartment. It carries out the reaction RNA(n) + a ribonucleoside 5'-triphosphate = RNA(n+1) + diphosphate. The catalysed reaction is ATP + H2O = ADP + phosphate + H(+). The enzyme catalyses Thiol-dependent hydrolysis of ester, thioester, amide, peptide and isopeptide bonds formed by the C-terminal Gly of ubiquitin (a 76-residue protein attached to proteins as an intracellular targeting signal).. It catalyses the reaction a 5'-end (N(7)-methyl 5'-triphosphoguanosine)-ribonucleoside in mRNA + S-adenosyl-L-methionine = a 5'-end (N(7)-methyl 5'-triphosphoguanosine)-(2'-O-methyl-ribonucleoside) in mRNA + S-adenosyl-L-homocysteine + H(+). It carries out the reaction uridylyl-uridylyl-ribonucleotide-RNA = a 3'-end uridylyl-2',3'-cyclophospho-uridine-RNA + a 5'-end dephospho-ribonucleoside-RNA. The catalysed reaction is a 5'-end diphospho-ribonucleoside in mRNA + GTP + H(+) = a 5'-end (5'-triphosphoguanosine)-ribonucleoside in mRNA + diphosphate. The enzyme catalyses a 5'-end (5'-triphosphoguanosine)-ribonucleoside in mRNA + S-adenosyl-L-methionine = a 5'-end (N(7)-methyl 5'-triphosphoguanosine)-ribonucleoside in mRNA + S-adenosyl-L-homocysteine. In terms of biological role, the replicase polyprotein of coronaviruses is a multifunctional protein: it contains the activities necessary for the transcription of negative stranded RNA, leader RNA, subgenomic mRNAs and progeny virion RNA as well as proteinases responsible for the cleavage of the polyprotein into functional products. Inhibits host translation by interacting with the 40S ribosomal subunit. The nsp1-40S ribosome complex further induces an endonucleolytic cleavage near the 5'UTR of host mRNAs, targeting them for degradation. Viral mRNAs are not susceptible to nsp1-mediated endonucleolytic RNA cleavage thanks to the presence of a 5'-end leader sequence and are therefore protected from degradation. By suppressing host gene expression, nsp1 facilitates efficient viral gene expression in infected cells and evasion from host immune response. Functionally, may play a role in the modulation of host cell survival signaling pathway by interacting with host PHB and PHB2. Indeed, these two proteins play a role in maintaining the functional integrity of the mitochondria and protecting cells from various stresses. Its function is as follows. Responsible for the cleavages located at the N-terminus of the replicase polyprotein. In addition, PL-PRO possesses a deubiquitinating/deISGylating activity and processes both 'Lys-48'- and 'Lys-63'-linked polyubiquitin chains from cellular substrates. Participates together with nsp4 in the assembly of virally-induced cytoplasmic double-membrane vesicles necessary for viral replication. Antagonizes innate immune induction of type I interferon by blocking the phosphorylation, dimerization and subsequent nuclear translocation of host IRF3. Also prevents host NF-kappa-B signaling. In terms of biological role, participates in the assembly of virally-induced cytoplasmic double-membrane vesicles necessary for viral replication. Cleaves the C-terminus of replicase polyprotein at 11 sites. Recognizes substrates containing the core sequence [ILMVF]-Q-|-[SGACN]. Also able to bind an ADP-ribose-1''-phosphate (ADRP). Functionally, plays a role in the initial induction of autophagosomes from host endoplasmic reticulum. Later, limits the expansion of these phagosomes that are no longer able to deliver viral components to lysosomes. Its function is as follows. Forms a hexadecamer with nsp8 (8 subunits of each) that may participate in viral replication by acting as a primase. Alternatively, may synthesize substantially longer products than oligonucleotide primers. In terms of biological role, forms a hexadecamer with nsp7 (8 subunits of each) that may participate in viral replication by acting as a primase. Alternatively, may synthesize substantially longer products than oligonucleotide primers. Forms a primer, NSP9-pU, which is utilized by the polymerase for the initiation of RNA chains. Interacts with ribosome signal recognition particle RNA (SRP). Together with NSP8, suppress protein integration into the cell membrane, thereby disrupting host immune defenses. Functionally, plays a pivotal role in viral transcription by stimulating both nsp14 3'-5' exoribonuclease and nsp16 2'-O-methyltransferase activities. Therefore plays an essential role in viral mRNAs cap methylation. Its function is as follows. RNA-directed RNA polymerase that catalyzes the transcription of viral genomic and subgenomic RNAs. Acts in complex with nsp7 and nsp8 to transcribe both the minus and positive strands of genomic RNA. The kinase-like NiRAN domain of NSP12 attaches one or more nucleotides to the amino terminus of NSP9, forming a covalent RNA-protein intermediate that serves as transcription/replication primer. Subgenomic RNAs (sgRNAs) are formed by discontinuous transcription: The polymerase has the ability to pause at transcription-regulating sequences (TRS) and jump to the leader TRS, resulting in a major deletion. This creates a series of subgenomic RNAs that are replicated, transcribed and translated. In addition, Nsp12 is a subunit of the viral RNA capping enzyme that catalyzes the RNA guanylyltransferase reaction for genomic and sub-genomic RNAs. Subsequently, the NiRAN domain transfers RNA to GDP, and forms the core cap structure GpppA-RNA. In terms of biological role, multi-functional protein with a zinc-binding domain in N-terminus displaying RNA and DNA duplex-unwinding activities with 5' to 3' polarity. Activity of helicase is dependent on magnesium. Plays a role in viral RNA synthesis through two distinct activities. The N7-guanine methyltransferase activity plays a role in the formation of the cap structure GpppA-RNA. The proofreading exoribonuclease reduces the sensitivity of the virus to RNA mutagens during replication. This activity acts on both ssRNA and dsRNA in a 3'-5' direction. Functionally, plays a role in viral transcription/replication and prevents the simultaneous activation of host cell dsRNA sensors, such as MDA5/IFIH1, OAS, and PKR. Acts by degrading the 5'-polyuridines generated during replication of the poly(A) region of viral genomic and subgenomic RNAs. Catalyzes a two-step reaction in which a 2'3'-cyclic phosphate (2'3'-cP) is first generated by 2'-O transesterification, which is then hydrolyzed to a 3'-phosphate (3'-P). If not degraded, poly(U) RNA would hybridize with poly(A) RNA tails and activate host dsRNA sensors. Its function is as follows. Methyltransferase that mediates mRNA cap 2'-O-ribose methylation to the 5'-cap structure of viral mRNAs. N7-methyl guanosine cap is a prerequisite for binding of nsp16. Therefore plays an essential role in viral mRNAs cap methylation which is essential to evade immune system. The chain is Replicase polyprotein 1ab (rep) from Pipistrellus abramus (Japanese pipistrelle).